A 296-amino-acid polypeptide reads, in one-letter code: ATP synthase gamma chain (296 aa).

The protein belongs to the ATPase gamma chain family. F-type ATPases have 2 components, CF(1) - the catalytic core - and CF(0) - the membrane proton channel. CF(1) has five subunits: alpha(3), beta(3), gamma(1), delta(1), epsilon(1). CF(0) has three main subunits: a, b and c.

It is found in the cell inner membrane. Functionally, produces ATP from ADP in the presence of a proton gradient across the membrane. The gamma chain is believed to be important in regulating ATPase activity and the flow of protons through the CF(0) complex. The protein is ATP synthase gamma chain of Jannaschia sp. (strain CCS1).